We begin with the raw amino-acid sequence, 763 residues long: ATP-dependent RNA helicase SUV3 homolog, mitochondrial (763 aa).

The N-terminal 43 residues, 1 to 43 (MQNCRRCISLTGLLRMTLYLRPSFSIDLSLRRLHRAAFLFSRK), are a transit peptide targeting the mitochondrion. Residues 181–321 (NARAITRKIV…ALDLLQKICE (141 aa)) enclose the Helicase ATP-binding domain. 194-201 (GPTNSGKT) is a binding site for ATP. Residues 330-508 (RLYDRLTELT…PTADQIELYA (179 aa)) enclose the Helicase C-terminal domain. The segment at 724 to 763 (AQQLGKSNSQSNENSEPVVNSDDEDNYSGIGRKTRKKRRK) is disordered. Polar residues predominate over residues 727–741 (LGKSNSQSNENSEPV).

The protein belongs to the helicase family. The cofactor is Mg(2+). It depends on Mn(2+) as a cofactor.

The protein resides in the mitochondrion. It carries out the reaction ATP + H2O = ADP + phosphate + H(+). Functionally, major helicase player in mitochondrial RNA metabolism and maintenance. Likely component of the mitochondrial degradosome (mtEXO) complex, that degrades 3' overhang double-stranded RNA with a 3'-to-5' directionality in an ATP-dependent manner. ATPase and ATP-dependent multisubstrate helicase, able to unwind double-stranded (ds) DNA and RNA, and RNA/DNA heteroduplexes in the 5'-to-3' direction. Regulates mRNA stability and is required for the correct processing and maturation of mitochondrial transcripts. The polypeptide is ATP-dependent RNA helicase SUV3 homolog, mitochondrial (Drosophila melanogaster (Fruit fly)).